We begin with the raw amino-acid sequence, 366 residues long: Autoinducer 2-binding periplasmic protein LuxP (366 aa).

An N-terminal signal peptide occupies residues 1–13 (MKKILLTCLLASA).

It belongs to the bacterial solute-binding protein 2 family.

It is found in the periplasm. In terms of biological role, binds to an autoinducer molecule. This complex then interacts with the LuxQ sensor protein. This Vibrio vulnificus (strain CMCP6) protein is Autoinducer 2-binding periplasmic protein LuxP (luxP).